A 258-amino-acid chain; its full sequence is Tryptophan synthase alpha chain (258 aa).

Residues E50 and D61 each act as proton acceptor in the active site.

It belongs to the TrpA family. In terms of assembly, tetramer of two alpha and two beta chains.

The catalysed reaction is (1S,2R)-1-C-(indol-3-yl)glycerol 3-phosphate + L-serine = D-glyceraldehyde 3-phosphate + L-tryptophan + H2O. Its pathway is amino-acid biosynthesis; L-tryptophan biosynthesis; L-tryptophan from chorismate: step 5/5. The alpha subunit is responsible for the aldol cleavage of indoleglycerol phosphate to indole and glyceraldehyde 3-phosphate. This Clostridium beijerinckii (strain ATCC 51743 / NCIMB 8052) (Clostridium acetobutylicum) protein is Tryptophan synthase alpha chain.